Here is a 324-residue protein sequence, read N- to C-terminus: Glucokinase (324 aa).

6-11 is an ATP binding site; that stretch reads IDIGGT.

Belongs to the bacterial glucokinase family.

The protein resides in the cytoplasm. It carries out the reaction D-glucose + ATP = D-glucose 6-phosphate + ADP + H(+). This chain is Glucokinase, found in Zymomonas mobilis subsp. mobilis (strain ATCC 31821 / ZM4 / CP4).